The primary structure comprises 1798 residues: DNA polymerase II large subunit (1798 aa).

Positions 286-309 are disordered; sequence EKGKSSEENKDESKAEDTGTESVA. The DOD-type homing endonuclease domain occupies 1184 to 1319; sequence VVGYYLAEGY…ETLLLAKFGI (136 aa). The tract at residues 1699-1798 is disordered; the sequence is TGHSNGKNGY…GISLDEFFGS (100 aa). Positions 1714-1731 are enriched in low complexity; sequence GKNGKASKKSGSLASKLS. A compositionally biased stretch (basic and acidic residues) spans 1733–1753; it reads KGKEPSKKKESAKPKRSEKVK.

The protein belongs to the archaeal DNA polymerase II family. As to quaternary structure, heterodimer of a large subunit and a small subunit. Post-translationally, this protein undergoes a protein self splicing that involves a post-translational excision of the intervening region (intein) followed by peptide ligation.

The enzyme catalyses DNA(n) + a 2'-deoxyribonucleoside 5'-triphosphate = DNA(n+1) + diphosphate. The catalysed reaction is Exonucleolytic cleavage in the 3'- to 5'-direction to yield nucleoside 5'-phosphates.. Functionally, possesses two activities: a DNA synthesis (polymerase) and an exonucleolytic activity that degrades single-stranded DNA in the 3'- to 5'-direction. Has a template-primer preference which is characteristic of a replicative DNA polymerase. The polypeptide is DNA polymerase II large subunit (polC) (Thermococcus kodakarensis (strain ATCC BAA-918 / JCM 12380 / KOD1) (Pyrococcus kodakaraensis (strain KOD1))).